The sequence spans 75 residues: Large ribosomal subunit protein bL31 (75 aa).

The protein belongs to the bacterial ribosomal protein bL31 family. Type A subfamily. In terms of assembly, part of the 50S ribosomal subunit.

Functionally, binds the 23S rRNA. The sequence is that of Large ribosomal subunit protein bL31 from Chlorobium limicola (strain DSM 245 / NBRC 103803 / 6330).